The sequence spans 433 residues: Enolase (433 aa).

Gln-167 is a (2R)-2-phosphoglycerate binding site. Glu-209 functions as the Proton donor in the catalytic mechanism. Mg(2+) contacts are provided by Asp-246, Glu-291, and Asp-318. Residues Lys-343, Arg-372, Ser-373, and Lys-394 each coordinate (2R)-2-phosphoglycerate. Lys-343 acts as the Proton acceptor in catalysis.

Belongs to the enolase family. Component of the RNA degradosome, a multiprotein complex involved in RNA processing and mRNA degradation. The cofactor is Mg(2+).

Its subcellular location is the cytoplasm. The protein localises to the secreted. It is found in the cell surface. The catalysed reaction is (2R)-2-phosphoglycerate = phosphoenolpyruvate + H2O. It functions in the pathway carbohydrate degradation; glycolysis; pyruvate from D-glyceraldehyde 3-phosphate: step 4/5. In terms of biological role, catalyzes the reversible conversion of 2-phosphoglycerate (2-PG) into phosphoenolpyruvate (PEP). It is essential for the degradation of carbohydrates via glycolysis. The protein is Enolase of Hamiltonella defensa subsp. Acyrthosiphon pisum (strain 5AT).